We begin with the raw amino-acid sequence, 211 residues long: Probable GTP-binding protein EngB (211 aa).

Positions 13–188 (SGYEIAFAGR…ASVMAGRLHF (176 aa)) constitute an EngB-type G domain. Residues 21-28 (GRSNAGKS), 48-52 (GRTQM), 67-70 (DLPG), 134-137 (TKAD), and 167-169 (FSS) contribute to the GTP site. 2 residues coordinate Mg(2+): serine 28 and threonine 50.

It belongs to the TRAFAC class TrmE-Era-EngA-EngB-Septin-like GTPase superfamily. EngB GTPase family. The cofactor is Mg(2+).

Functionally, necessary for normal cell division and for the maintenance of normal septation. This is Probable GTP-binding protein EngB from Acinetobacter baumannii (strain ATCC 17978 / DSM 105126 / CIP 53.77 / LMG 1025 / NCDC KC755 / 5377).